The primary structure comprises 430 residues: Adenylosuccinate synthetase (430 aa).

GTP contacts are provided by residues 17 to 23 (GDEGKGK) and 45 to 47 (GHT). The active-site Proton acceptor is the aspartate 18. Mg(2+)-binding residues include aspartate 18 and glycine 45. Residues 18 to 21 (DEGK), 43 to 46 (NAGH), threonine 139, arginine 153, asparagine 229, threonine 244, and arginine 308 contribute to the IMP site. The active-site Proton donor is histidine 46. Residue 304 to 310 (TVTGRRR) participates in substrate binding. GTP is bound by residues arginine 310, 336 to 338 (KLD), and 418 to 420 (GVG).

Belongs to the adenylosuccinate synthetase family. In terms of assembly, homodimer. The cofactor is Mg(2+).

It is found in the cytoplasm. It catalyses the reaction IMP + L-aspartate + GTP = N(6)-(1,2-dicarboxyethyl)-AMP + GDP + phosphate + 2 H(+). It participates in purine metabolism; AMP biosynthesis via de novo pathway; AMP from IMP: step 1/2. Its function is as follows. Plays an important role in the de novo pathway and in the salvage pathway of purine nucleotide biosynthesis. Catalyzes the first committed step in the biosynthesis of AMP from IMP. The protein is Adenylosuccinate synthetase of Cryptococcus neoformans var. neoformans serotype D (strain JEC21 / ATCC MYA-565) (Filobasidiella neoformans).